A 308-amino-acid chain; its full sequence is ATP synthase gamma chain (308 aa).

This sequence belongs to the ATPase gamma chain family. F-type ATPases have 2 components, CF(1) - the catalytic core - and CF(0) - the membrane proton channel. CF(1) has five subunits: alpha(3), beta(3), gamma(1), delta(1), epsilon(1). CF(0) has three main subunits: a, b and c.

It localises to the cell inner membrane. Produces ATP from ADP in the presence of a proton gradient across the membrane. The gamma chain is believed to be important in regulating ATPase activity and the flow of protons through the CF(0) complex. In Bartonella tribocorum (strain CIP 105476 / IBS 506), this protein is ATP synthase gamma chain.